The chain runs to 196 residues: MPTSAAPVPAVAAQSPTTRKAIANNFRELTKDPKKLDEAANQLYESLLEDAVTGIFIEVHHLRKIGNLSALDGVAEESAHRICDVPNLDIFGVSTAKKAIDCTCPNCDRLVAAARFAPHLEKCMGMGRISSRIASRRLATKEGTSASSNSSYVHSGANAGGTDDEDDVDWSSDKRKKKSTQNSRNNGSKKNNGKTF.

Residues 102–123 (CTCPNCDRLVAAARFAPHLEKC) form an SGF11-type zinc finger. A disordered region spans residues 140–196 (TKEGTSASSNSSYVHSGANAGGTDDEDDVDWSSDKRKKKSTQNSRNNGSKKNNGKTF). Over residues 142-153 (EGTSASSNSSYV) the composition is skewed to polar residues. Position 172 is a phosphoserine (Ser172). Residues 182-196 (NSRNNGSKKNNGKTF) show a composition bias toward low complexity.

This sequence belongs to the SGF11 family. Component of some SAGA transcription coactivator-HAT complexes, at least composed of Ada2b, not/nonstop, Pcaf/Gcn5, Sgf11 and Spt3. Within the SAGA complex, Sgf11, e(y)2, and not/nonstop form an additional subcomplex of SAGA called the DUB module (deubiquitination module). Interacts directly with not/nonstop. Interacts with the AMEX complex component xmas-2. Interacts with Cbp80; important for promoter recruitment of Sgf11 that is not associated with the DUB module.

The protein localises to the nucleus. It is found in the nucleoplasm. Its subcellular location is the cytoplasm. Its function is as follows. Component of the transcription regulatory histone acetylation (HAT) complex SAGA, a multiprotein complex that activates transcription by remodeling chromatin and mediating histone acetylation and deubiquitination. Within the SAGA complex, participates in a subcomplex that specifically deubiquitinates histone H2B. The SAGA complex is recruited to specific gene promoters by activators, where it is required for transcription. Required for nuclear receptor-mediated transactivation. Binds independently on SAGA to promoters in an RNA-dependent manner. Binds to mRNA and is essential for total mRNA export from the nucleus. Required to counteract heterochromatin silencing. Controls the development of neuronal connectivity in visual system by being required for accurate axon targeting in the optic lobe. Required for expression of ecdysone-induced genes such as br/broad. This chain is SAGA-associated factor 11 homolog, found in Drosophila persimilis (Fruit fly).